Here is a 137-residue protein sequence, read N- to C-terminus: Chaperone protein YscB (137 aa).

In terms of assembly, interacts with SycN to form a complex which specifically binds to YopN.

It localises to the cytoplasm. Its subcellular location is the cell inner membrane. Its function is as follows. Functions as a specific chaperone for YopN. It could facilitate the secretion and the subsequent translocation of YopN. This Yersinia pestis protein is Chaperone protein YscB (yscB).